A 388-amino-acid chain; its full sequence is Processive diacylglycerol beta-glucosyltransferase (388 aa).

It belongs to the glycosyltransferase 28 family. UgtP subfamily.

Its subcellular location is the cell membrane. It catalyses the reaction a 1,2-diacyl-3-O-(beta-D-glucopyranosyl)-sn-glycerol + UDP-alpha-D-glucose = a 1,2-diacyl-3-O-(beta-D-Glc-(1-&gt;6)-beta-D-Glc)-sn-glycerol + UDP + H(+). The catalysed reaction is a 1,2-diacyl-3-O-(beta-D-Glc-(1-&gt;6)-beta-D-Glc)-sn-glycerol + UDP-alpha-D-glucose = a 1,2-diacyl-3-O-(beta-D-Glc-(1-&gt;6)-beta-D-Glc-(1-&gt;6)-beta-D-Glc)-sn-glycerol + UDP + H(+). The enzyme catalyses a 1,2-diacyl-sn-glycerol + UDP-alpha-D-glucose = a 1,2-diacyl-3-O-(beta-D-glucopyranosyl)-sn-glycerol + UDP + H(+). It participates in glycolipid metabolism; diglucosyl-diacylglycerol biosynthesis. Functionally, processive glucosyltransferase involved in the biosynthesis of both the bilayer- and non-bilayer-forming membrane glucolipids. Is able to successively transfer up to three glucosyl residues to diacylglycerol (DAG), thereby catalyzing the formation of beta-monoglucosyl-DAG (3-O-(beta-D-glucopyranosyl)-1,2-diacyl-sn-glycerol), beta-diglucosyl-DAG (3-O-(beta-D-glucopyranosyl-beta-(1-&gt;6)-D-glucopyranosyl)-1,2-diacyl-sn-glycerol) and beta-triglucosyl-DAG (3-O-(beta-D-glucopyranosyl-beta-(1-&gt;6)-D-glucopyranosyl-beta-(1-&gt;6)-D-glucopyranosyl)-1,2-diacyl-sn-glycerol). Beta-diglucosyl-DAG is the predominant glycolipid found in Bacillales and is also used as a membrane anchor for lipoteichoic acid (LTA). The protein is Processive diacylglycerol beta-glucosyltransferase of Bacillus anthracis (strain A0248).